The sequence spans 554 residues: Hydroxylamine reductase (554 aa).

[2Fe-2S] cluster-binding residues include Cys3, Cys6, Cys18, and Cys25. 8 residues coordinate hybrid [4Fe-2O-2S] cluster: His252, Glu276, Cys320, Cys408, Cys436, Cys461, Glu495, and Lys497. Cys408 bears the Cysteine persulfide mark.

The protein belongs to the HCP family. [2Fe-2S] cluster serves as cofactor. It depends on hybrid [4Fe-2O-2S] cluster as a cofactor.

Its subcellular location is the cytoplasm. It carries out the reaction A + NH4(+) + H2O = hydroxylamine + AH2 + H(+). Catalyzes the reduction of hydroxylamine to form NH(3) and H(2)O. This Shewanella oneidensis (strain ATCC 700550 / JCM 31522 / CIP 106686 / LMG 19005 / NCIMB 14063 / MR-1) protein is Hydroxylamine reductase.